Consider the following 254-residue polypeptide: UstYa family oxidase phomYc' (254 aa).

The helical transmembrane segment at 38 to 58 (LVLVLQSVLIISLLASLHILG) threads the bilayer. N64 carries N-linked (GlcNAc...) asparagine glycosylation. The HXXHC 1 signature appears at 138-142 (HQLHC). An N-linked (GlcNAc...) asparagine glycan is attached at N159. The HXXHC 2 signature appears at 173–177 (HIDHC).

It belongs to the ustYa family.

It is found in the membrane. It functions in the pathway mycotoxin biosynthesis. Functionally, ustYa family oxidase; part of the gene cluster that mediates the biosynthesis of the phomopsins, a group of hexapeptide mycotoxins which infects lupins and causes lupinosis disease in livestock. Within the pathway, phomYc' catalyzes the desaturation of the Ile moiety into 2,3-dehydroisoleucine (dIle). The pathway starts with the processing of the precursor phomA' by several endopeptidases including kexin proteases as well as the cluster-specific S41 family peptidase phomP1 and the oligopeptidase phomG' to produce 10 identical copies of the hexapeptide Tyr-Val-Ile-Pro-Ile-Asp. After being excised from the precursor peptide, the core peptides are cyclized and modified post-translationally by enzymes encoded within the gene cluster. The timing and order of proteolysis of the phomA' precursor and PTMs are still unknown. Two tyrosinase-like enzymes, phomQ1' and phomQ2, catalyze the chlorination and hydroxylation of Tyr, respectively. PhomYb, is proposed to be involved in the construction of the macrocyclic structure. The other 4 ustYa family proteins may be involved in PTMs that generate the unique structure of phomopsin A. PhomYa' is required for the hydroxylation of C-beta of Tyr. PhomYc', phomYd', and phomYe are responsible for the biosynthesis of 2,3-dehydroisoleucine (dIle), 2,3-dehydroaspartic acid (dAsp), and 3,4-dehydroproline (dPro), respectively. While dIle formation by phomYc' is indispensable for the installation of dAsp by phomYd', the order of the other PTMs have not been elucidated yet. Most of the biosynthetic enzymes likely have broad substrate specificity, and thus, there might be a metabolic grid from a precursor to phomopsin A. The enzyme(s) responsible for the biosynthesis of 3,4-dehydrovaline (dVal) have also not been identified yet. Finally, phomM' acts as an S-adenosylmethionine-dependent alpha-N-methyltransferase that catalyzes two successive N-methylation reactions, converting N-desmethyl-phomopsin A to phomopsin A and phomopsin A further to an N,N-dimethylated congener called phomopsin E. The polypeptide is UstYa family oxidase phomYc' (Diaporthe leptostromiformis (Lupinosis disease fungus)).